The chain runs to 406 residues: Lissencephaly-1 homolog (406 aa).

One can recognise a LisH domain in the interval 7–39 (QREELNKAIADYLRSNGYESALEAFQKEAEMPG). Positions 54-81 (TSVIRLQKKVMDLEAKLAEAEKEFQSGG) form a coiled coil. The span at 74-89 (EKEFQSGGPNKKERSP) shows a compositional bias: basic and acidic residues. The interval 74 to 99 (EKEFQSGGPNKKERSPSEWIPRPPAR) is disordered. WD repeat units follow at residues 104–145 (GHRS…RTLK), 146–185 (GHTD…NIKT), 188–227 (GHDH…CVKT), 230–269 (GHRE…CKAE), 272–329 (EHEH…CIMT), 332–371 (GHDN…CQKT), and 374–406 (AHQH…WECR).

Belongs to the WD repeat LIS1/nudF family.

Its subcellular location is the cytoplasm. It is found in the cytoskeleton. The protein localises to the microtubule organizing center. It localises to the centrosome. Positively regulates the activity of the minus-end directed microtubule motor protein dynein. May enhance dynein-mediated microtubule sliding by targeting dynein to the microtubule plus end. Required for several dynein- and microtubule-dependent processes. This chain is Lissencephaly-1 homolog, found in Branchiostoma floridae (Florida lancelet).